The sequence spans 172 residues: Ribosome maturation factor RimM (172 aa).

In terms of domain architecture, PRC barrel spans Glu-96–Leu-168.

The protein belongs to the RimM family. In terms of assembly, binds ribosomal protein uS19.

It localises to the cytoplasm. Its function is as follows. An accessory protein needed during the final step in the assembly of 30S ribosomal subunit, possibly for assembly of the head region. Essential for efficient processing of 16S rRNA. May be needed both before and after RbfA during the maturation of 16S rRNA. It has affinity for free ribosomal 30S subunits but not for 70S ribosomes. This is Ribosome maturation factor RimM from Streptococcus gordonii (strain Challis / ATCC 35105 / BCRC 15272 / CH1 / DL1 / V288).